The sequence spans 1458 residues: ABC multidrug transporter B (1458 aa).

The next 5 helical transmembrane spans lie at 30–50, 70–90, 102–122, 128–148, and 165–185; these read FSLL…VLII, LLWA…VLAV, ASIA…LLSC, STTP…FDIA, and IAIL…LEAV. Asparagine 208 is a glycosylation site (N-linked (GlcNAc...) asparagine). The chain crosses the membrane as a helical span at residues 273-295; the sequence is WPLLSAVPPRACLAALNFCQPLL. Positions 283 to 561 constitute an ABC transmembrane type-1 1 domain; sequence ACLAALNFCQ…LVMALMTFVG (279 aa). N-linked (GlcNAc...) asparagine glycosylation is present at asparagine 309. The next 5 membrane-spanning stretches (helical) occupy residues 314–334, 387–407, 411–431, 501–521, and 541–561; these read IGYG…VTMG, WQTI…IYLL, LGVA…GCLI, LGWT…YGIM, and LFAL…TFVG. Residues 626 to 853 enclose the ABC transporter 1 domain; it reads LTVKNATFAW…AGGYVSSFGL (228 aa). An N-linked (GlcNAc...) asparagine glycan is attached at asparagine 630. Position 660–667 (660–667) interacts with ATP; sequence GPSGCGKS. N-linked (GlcNAc...) asparagine glycosylation is found at asparagine 702, asparagine 804, and asparagine 879. One can recognise an ABC transmembrane type-1 2 domain in the interval 933–1182; that stretch reads PNGRTGYYLG…LVTFWTNLET (250 aa). Transmembrane regions (helical) follow at residues 940-960, 978-998, 1016-1036, 1040-1060, 1125-1145, and 1156-1176; these read YLGI…IGCW, LLAT…SGSI, AAIN…LMGI, YAAI…KVYL, LTLT…VLVV, and VGVA…LVTF. The 231-residue stretch at 1219–1449 folds into the ABC transporter 2 domain; it reads IEFKSVSAEY…EGSYFSRLYA (231 aa). An ATP-binding site is contributed by 1252–1259; it reads GRTGSGKT. N-linked (GlcNAc...) asparagine glycosylation is present at asparagine 1316.

This sequence belongs to the ABC transporter superfamily. ABCC family. Conjugate transporter (TC 3.A.1.208) subfamily.

The protein resides in the cell membrane. Its function is as follows. Pleiotropic ABC efflux transporter that may be involved in A.fumigatus adaptation to azoles such as vorizonazole. The protein is ABC multidrug transporter B of Aspergillus fumigatus (strain ATCC MYA-4609 / CBS 101355 / FGSC A1100 / Af293) (Neosartorya fumigata).